Here is a 428-residue protein sequence, read N- to C-terminus: 3-phosphoshikimate 1-carboxyvinyltransferase (428 aa).

The 3-phosphoshikimate site is built by K20, S21, and R25. A phosphoenolpyruvate-binding site is contributed by K20. Phosphoenolpyruvate is bound by residues G92 and R120. S166, Q168, D314, and K341 together coordinate 3-phosphoshikimate. Phosphoenolpyruvate is bound at residue Q168. D314 serves as the catalytic Proton acceptor. R345 and R387 together coordinate phosphoenolpyruvate.

Belongs to the EPSP synthase family. In terms of assembly, monomer.

It localises to the cytoplasm. The enzyme catalyses 3-phosphoshikimate + phosphoenolpyruvate = 5-O-(1-carboxyvinyl)-3-phosphoshikimate + phosphate. It functions in the pathway metabolic intermediate biosynthesis; chorismate biosynthesis; chorismate from D-erythrose 4-phosphate and phosphoenolpyruvate: step 6/7. Functionally, catalyzes the transfer of the enolpyruvyl moiety of phosphoenolpyruvate (PEP) to the 5-hydroxyl of shikimate-3-phosphate (S3P) to produce enolpyruvyl shikimate-3-phosphate and inorganic phosphate. The chain is 3-phosphoshikimate 1-carboxyvinyltransferase from Listeria monocytogenes serovar 1/2a (strain ATCC BAA-679 / EGD-e).